Consider the following 474-residue polypeptide: MRIYNTATRQVEEFTTYVPRLARGYVCGITPYDHMHVGHGRVYVFFDIFRRYLERLGYEVRLVINFTDIDDKIVNKAREEFGHEAYKRWREVPERYIAEYFEMTRRLYIKPAYAYPKVTENVEDMVKWISTLVEKGYAYVAPDGSVYFEVAKVPNYGVLSRQKIEELIAGARVEPEPGKRNPLDFALWKSWTPGEPWWNSPWCPGRPGWHLECVVMSTKHLGAPFDFHGGGADLIFPHHENEIAIARAYFGVDNFARYWIHVGYLTVRGEKMSKSLGNIITLREVLSKHSGEALRLAYAMSHYRKPMEFTYELLQQAEDMAKTLYTAYDELSQALRDAGEKDQEPIAQEALKYAGAFYGALDDDMSTPEAVQQLYGMARYIISTVLHRVEKISRETALAVLNKYVEMADVLGVLERRQIPKELEEAVKALVETRARLRQERQYQLADYIRQRLAELGVELHDFGPRTYYTYRRA.

Position 27 (Cys27) interacts with Zn(2+). Residues 29–39 (ITPYDHMHVGH) carry the 'HIGH' region motif. 3 residues coordinate Zn(2+): Cys213, His238, and Glu242. Residues 271-275 (KMSKS) carry the 'KMSKS' region motif. Lys274 serves as a coordination point for ATP.

It belongs to the class-I aminoacyl-tRNA synthetase family. It depends on Zn(2+) as a cofactor.

Its subcellular location is the cytoplasm. It carries out the reaction tRNA(Cys) + L-cysteine + ATP = L-cysteinyl-tRNA(Cys) + AMP + diphosphate. The polypeptide is Cysteine--tRNA ligase (Pyrobaculum neutrophilum (strain DSM 2338 / JCM 9278 / NBRC 100436 / V24Sta) (Thermoproteus neutrophilus)).